Reading from the N-terminus, the 580-residue chain is Probable RNA-binding protein CG14230 (580 aa).

The RRM domain maps to 4 to 81 (TRFFLADLPT…EKLRVSLAKE (78 aa)). The span at 89–100 (REREENQRREQG) shows a compositional bias: basic and acidic residues. 2 disordered regions span residues 89–131 (RERE…EDEE) and 173–211 (QHRKAAKQKPDANVSQAEQKRKESLNKMRQGHQQKKSAI). Over residues 110–120 (PSSQLLVQSGQ) the composition is skewed to polar residues. Serine 231 carries the phosphoserine modification. Composition is skewed to acidic residues over residues 254 to 263 (ENDDDEEEEQ) and 298 to 313 (NEEEEAELEDQPEPEE). 3 disordered regions span residues 254 to 316 (ENDD…ESER), 333 to 395 (SAND…SAVS), and 463 to 520 (PFSY…IPRN). Basic and acidic residues-rich tracts occupy residues 348 to 358 (LRFDPAKEGHQ) and 365 to 377 (QPKEEEEKKEETS). The segment covering 386 to 395 (AGNSQASAVS) has biased composition (polar residues). Serine 468 is modified (phosphoserine). Threonine 475 is modified (phosphothreonine).

This is Probable RNA-binding protein CG14230 from Drosophila melanogaster (Fruit fly).